The sequence spans 121 residues: Iron-sulfur cluster assembly protein CyaY (121 aa).

It belongs to the frataxin family.

Functionally, involved in iron-sulfur (Fe-S) cluster assembly. May act as a regulator of Fe-S biogenesis. In Buchnera aphidicola subsp. Schizaphis graminum (strain Sg), this protein is Iron-sulfur cluster assembly protein CyaY.